The following is a 188-amino-acid chain: UPF0301 protein XC_1365 (188 aa).

The protein belongs to the UPF0301 (AlgH) family.

This is UPF0301 protein XC_1365 from Xanthomonas campestris pv. campestris (strain 8004).